The chain runs to 560 residues: Probable pectinesterase/pectinesterase inhibitor 20 (560 aa).

An N-terminal signal peptide occupies residues 1-24; that stretch reads MSQKLMFLFTLACLSSLPSPFISA. A pectinesterase inhibitor 20 region spans residues 25-179; sequence QIPAIGNATS…TKLYGVSLAL (155 aa). Residues Asn31, Asn168, Asn251, Asn255, Asn268, Asn307, and Asn314 are each glycosylated (N-linked (GlcNAc...) asparagine). The pectinesterase 20 stretch occupies residues 246-544; the sequence is VTVIQNGTGN…FTVTNFLVGE (299 aa). Thr323 provides a ligand contact to substrate. Asn340 carries N-linked (GlcNAc...) asparagine glycosylation. Gln353 contacts substrate. The active-site Proton donor; for pectinesterase activity is the Asp376. Cysteines 390 and 410 form a disulfide. The active-site Nucleophile; for pectinesterase activity is the Asp397. The tract at residues 417–441 is disordered; the sequence is PRKGQSNEVTAQGRTDPNQNTGTAI. The segment covering 419–439 has biased composition (polar residues); it reads KGQSNEVTAQGRTDPNQNTGT. Residue Asn456 is glycosylated (N-linked (GlcNAc...) asparagine). Substrate contacts are provided by Arg465 and Trp467. N-linked (GlcNAc...) asparagine glycosylation is found at Asn507, Asn528, and Asn534.

This sequence in the N-terminal section; belongs to the PMEI family. In the C-terminal section; belongs to the pectinesterase family. Expressed in flower buds.

The protein localises to the secreted. It localises to the cell wall. The enzyme catalyses [(1-&gt;4)-alpha-D-galacturonosyl methyl ester](n) + n H2O = [(1-&gt;4)-alpha-D-galacturonosyl](n) + n methanol + n H(+). It participates in glycan metabolism; pectin degradation; 2-dehydro-3-deoxy-D-gluconate from pectin: step 1/5. Acts in the modification of cell walls via demethylesterification of cell wall pectin. The polypeptide is Probable pectinesterase/pectinesterase inhibitor 20 (PME20) (Arabidopsis thaliana (Mouse-ear cress)).